We begin with the raw amino-acid sequence, 270 residues long: tRNA pseudouridine synthase A (270 aa).

The active-site Nucleophile is the Asp-52. Tyr-110 contributes to the substrate binding site. Residues 251–270 (TGAADEPAAPHGVTETRMQL) form a disordered region.

It belongs to the tRNA pseudouridine synthase TruA family. Homodimer.

The catalysed reaction is uridine(38/39/40) in tRNA = pseudouridine(38/39/40) in tRNA. Formation of pseudouridine at positions 38, 39 and 40 in the anticodon stem and loop of transfer RNAs. The chain is tRNA pseudouridine synthase A from Roseiflexus sp. (strain RS-1).